A 140-amino-acid polypeptide reads, in one-letter code: Small ribosomal subunit protein bS6 (140 aa).

The disordered stretch occupies residues 111–140 (EHFTGPAGAEGSDDESTESTDEAVAETADA). The span at 121–140 (GSDDESTESTDEAVAETADA) shows a compositional bias: acidic residues.

The protein belongs to the bacterial ribosomal protein bS6 family.

Functionally, binds together with bS18 to 16S ribosomal RNA. This Rhodopirellula baltica (strain DSM 10527 / NCIMB 13988 / SH1) protein is Small ribosomal subunit protein bS6.